A 424-amino-acid polypeptide reads, in one-letter code: Histidinol dehydrogenase homolog (424 aa).

Zn(2+) is bound by residues Gln-250 and His-253. Catalysis depends on proton acceptor residues Glu-318 and His-319. Asp-352 and His-411 together coordinate Zn(2+).

Belongs to the histidinol dehydrogenase family. Requires Zn(2+) as cofactor.

The chain is Histidinol dehydrogenase homolog from Shouchella clausii (strain KSM-K16) (Alkalihalobacillus clausii).